A 98-amino-acid polypeptide reads, in one-letter code: Large ribosomal subunit protein eL21 (98 aa).

The span at 1–24 (MVKKAHSFRRKTRGKLSKHPRRRG) shows a compositional bias: basic residues. The tract at residues 1–27 (MVKKAHSFRRKTRGKLSKHPRRRGLPP) is disordered.

The protein belongs to the eukaryotic ribosomal protein eL21 family.

The chain is Large ribosomal subunit protein eL21 from Thermococcus gammatolerans (strain DSM 15229 / JCM 11827 / EJ3).